Consider the following 201-residue polypeptide: Dephospho-CoA kinase (201 aa).

Residues 4–201 (AFFVTASIAC…VIQEISKGKM (198 aa)) enclose the DPCK domain. 12–17 (ACGKST) contributes to the ATP binding site.

The protein belongs to the CoaE family.

It localises to the cytoplasm. It carries out the reaction 3'-dephospho-CoA + ATP = ADP + CoA + H(+). It functions in the pathway cofactor biosynthesis; coenzyme A biosynthesis; CoA from (R)-pantothenate: step 5/5. Catalyzes the phosphorylation of the 3'-hydroxyl group of dephosphocoenzyme A to form coenzyme A. The sequence is that of Dephospho-CoA kinase from Campylobacter jejuni (strain RM1221).